Consider the following 259-residue polypeptide: Glucosamine-6-phosphate deaminase (259 aa).

The active-site Proton acceptor; for enolization step is the Asp-66. Catalysis depends on Asp-135, which acts as the For ring-opening step. Catalysis depends on His-137, which acts as the Proton acceptor; for ring-opening step. Catalysis depends on Glu-142, which acts as the For ring-opening step.

The protein belongs to the glucosamine/galactosamine-6-phosphate isomerase family. NagB subfamily.

The enzyme catalyses alpha-D-glucosamine 6-phosphate + H2O = beta-D-fructose 6-phosphate + NH4(+). It functions in the pathway amino-sugar metabolism; N-acetylneuraminate degradation; D-fructose 6-phosphate from N-acetylneuraminate: step 5/5. Its function is as follows. Catalyzes the reversible isomerization-deamination of glucosamine 6-phosphate (GlcN6P) to form fructose 6-phosphate (Fru6P) and ammonium ion. The chain is Glucosamine-6-phosphate deaminase from Rhodococcus opacus (strain B4).